Here is a 358-residue protein sequence, read N- to C-terminus: Peptide chain release factor 1 (358 aa).

Residue Gln-233 is modified to N5-methylglutamine.

The protein belongs to the prokaryotic/mitochondrial release factor family. In terms of processing, methylated by PrmC. Methylation increases the termination efficiency of RF1.

The protein resides in the cytoplasm. Functionally, peptide chain release factor 1 directs the termination of translation in response to the peptide chain termination codons UAG and UAA. In Geobacillus sp. (strain WCH70), this protein is Peptide chain release factor 1.